Here is a 544-residue protein sequence, read N- to C-terminus: Phosphoacetylglucosamine mutase (544 aa).

Serine 66 acts as the Phosphoserine intermediate in catalysis. Positions 66, 290, 292, and 294 each coordinate Mg(2+). Substrate-binding positions include 387–389, 512–516, and arginine 521; these read EAN and RASGT.

It belongs to the phosphohexose mutase family. Requires Mg(2+) as cofactor.

It carries out the reaction N-acetyl-alpha-D-glucosamine 1-phosphate = N-acetyl-D-glucosamine 6-phosphate. The protein operates within nucleotide-sugar biosynthesis; UDP-N-acetyl-alpha-D-glucosamine biosynthesis; N-acetyl-alpha-D-glucosamine 1-phosphate from alpha-D-glucosamine 6-phosphate (route I): step 2/2. Catalyzes the conversion of GlcNAc-6-P into GlcNAc-1-P during the synthesis of uridine diphosphate/UDP-GlcNAc, which is a biosynthetic precursor of chitin and also supplies the amino sugars for N-linked oligosaccharides of glycoproteins. The protein is Phosphoacetylglucosamine mutase of Candida albicans (Yeast).